Here is a 323-residue protein sequence, read N- to C-terminus: D-alanine--D-alanine ligase (323 aa).

In terms of domain architecture, ATP-grasp spans 105 to 305; the sequence is KQQLVPRGIP…YEDLVEAIVE (201 aa). 131-188 provides a ligand contact to ATP; it reads PLARPYVLKPVNEGSSVGVAIVTDESNYGNPIRRDAPGPWQEFRELLAEPFIRGRELT. Mg(2+) is bound by residues Asp256, Glu272, and Asn274.

Belongs to the D-alanine--D-alanine ligase family. It depends on Mg(2+) as a cofactor. Mn(2+) serves as cofactor.

The protein resides in the cytoplasm. It carries out the reaction 2 D-alanine + ATP = D-alanyl-D-alanine + ADP + phosphate + H(+). Its pathway is cell wall biogenesis; peptidoglycan biosynthesis. In terms of biological role, cell wall formation. This chain is D-alanine--D-alanine ligase, found in Erythrobacter litoralis (strain HTCC2594).